We begin with the raw amino-acid sequence, 143 residues long: Large ribosomal subunit protein uL16 (143 aa).

The span at 1–14 (MLTPKRVKWRRQHR) shows a compositional bias: basic residues. The interval 1–23 (MLTPKRVKWRRQHRPDRAGKAKG) is disordered.

The protein belongs to the universal ribosomal protein uL16 family. In terms of assembly, part of the 50S ribosomal subunit.

In terms of biological role, binds 23S rRNA and is also seen to make contacts with the A and possibly P site tRNAs. This is Large ribosomal subunit protein uL16 from Desulforudis audaxviator (strain MP104C).